We begin with the raw amino-acid sequence, 424 residues long: Histidine--tRNA ligase (424 aa).

This sequence belongs to the class-II aminoacyl-tRNA synthetase family. As to quaternary structure, homodimer.

Its subcellular location is the cytoplasm. It carries out the reaction tRNA(His) + L-histidine + ATP = L-histidyl-tRNA(His) + AMP + diphosphate + H(+). This is Histidine--tRNA ligase from Salmonella arizonae (strain ATCC BAA-731 / CDC346-86 / RSK2980).